Consider the following 435-residue polypeptide: UDP-N-acetylmuramate--L-alanine ligase (435 aa).

Residue 108-114 (GSHGKTS) coordinates ATP.

This sequence belongs to the MurCDEF family.

It localises to the cytoplasm. The enzyme catalyses UDP-N-acetyl-alpha-D-muramate + L-alanine + ATP = UDP-N-acetyl-alpha-D-muramoyl-L-alanine + ADP + phosphate + H(+). Its pathway is cell wall biogenesis; peptidoglycan biosynthesis. Cell wall formation. This is UDP-N-acetylmuramate--L-alanine ligase from Shouchella clausii (strain KSM-K16) (Alkalihalobacillus clausii).